We begin with the raw amino-acid sequence, 853 residues long: DNA mismatch repair protein MutS (853 aa).

614–621 (GPNMGGKS) provides a ligand contact to ATP.

The protein belongs to the DNA mismatch repair MutS family.

Its function is as follows. This protein is involved in the repair of mismatches in DNA. It is possible that it carries out the mismatch recognition step. This protein has a weak ATPase activity. This chain is DNA mismatch repair protein MutS, found in Escherichia coli O6:H1 (strain CFT073 / ATCC 700928 / UPEC).